The sequence spans 489 residues: DNA-directed RNA polymerase subunit beta' C-terminal section (489 aa).

Aspartate 208, aspartate 210, and aspartate 212 together coordinate Mg(2+).

The protein belongs to the RNA polymerase beta' chain family. RpoC1 subfamily. In terms of assembly, in plastids the minimal PEP RNA polymerase catalytic core is composed of four subunits: alpha, beta, beta', and beta''. When a (nuclear-encoded) sigma factor is associated with the core the holoenzyme is formed, which can initiate transcription. It depends on Mg(2+) as a cofactor.

It localises to the plastid. The protein localises to the chloroplast. It carries out the reaction RNA(n) + a ribonucleoside 5'-triphosphate = RNA(n+1) + diphosphate. DNA-dependent RNA polymerase catalyzes the transcription of DNA into RNA using the four ribonucleoside triphosphates as substrates. The protein is DNA-directed RNA polymerase subunit beta' C-terminal section (rpoC1B) of Chlamydomonas reinhardtii (Chlamydomonas smithii).